Reading from the N-terminus, the 68-residue chain is Alpha-conotoxin-like Lp1.2 (68 aa).

The N-terminal stretch at 1–21 (MGMRMMFTVFLLVVLATTVVS) is a signal peptide. A propeptide spanning residues 22 to 48 (FTSDRAFDGRNAAASDKASDLISLAVR) is cleaved from the precursor. Disulfide bonds link C50–C56 and C51–C64. The ser-Xaa-Pro motif, crucial for potent interaction with nAChR stretch occupies residues 52–54 (SHP). The residue at position 64 (C64) is a Cysteine amide. A propeptide spanning residues 65 to 68 (GGKR) is cleaved from the precursor.

It belongs to the conotoxin A superfamily. As to expression, expressed by the venom duct.

It is found in the secreted. Alpha-conotoxins act on postsynaptic membranes, they bind to the nicotinic acetylcholine receptors (nAChR) and thus inhibit them. The sequence is that of Alpha-conotoxin-like Lp1.2 from Conus leopardus (Leopard cone).